A 367-amino-acid chain; its full sequence is Zinc metalloproteinase nas-22 (367 aa).

The first 16 residues, 1–16 (MKSFFILLSILQECYG), serve as a signal peptide directing secretion. The Peptidase M12A domain maps to 41–237 (VLIRGSDEER…LMINKYYECS (197 aa)). Residues Asn56 and Asn85 are each glycosylated (N-linked (GlcNAc...) asparagine). 4 disulfide bridges follow: Cys88-Cys236, Cys111-Cys130, Cys238-Cys258, and Cys260-Cys269. His138 contributes to the Zn(2+) binding site. Glu139 is a catalytic residue. Residues His142 and His148 each coordinate Zn(2+). Residues Asn169, Asn241, and Asn254 are each glycosylated (N-linked (GlcNAc...) asparagine). Residues 232-270 (KYYECSCANNLSCKNHGYPNPSNCSQCNCPYGFGGADCS) form the EGF-like domain. N-linked (GlcNAc...) asparagine glycosylation is found at Asn287 and Asn322.

Zn(2+) serves as cofactor. Expressed in uterine seam (utse) cell.

The protein localises to the secreted. Functionally, metalloprotease. This is Zinc metalloproteinase nas-22 (nas-22) from Caenorhabditis elegans.